We begin with the raw amino-acid sequence, 223 residues long: Urease accessory protein UreF (223 aa).

The protein belongs to the UreF family. As to quaternary structure, ureD, UreF and UreG form a complex that acts as a GTP-hydrolysis-dependent molecular chaperone, activating the urease apoprotein by helping to assemble the nickel containing metallocenter of UreC. The UreE protein probably delivers the nickel.

It is found in the cytoplasm. Its function is as follows. Required for maturation of urease via the functional incorporation of the urease nickel metallocenter. In Sinorhizobium medicae (strain WSM419) (Ensifer medicae), this protein is Urease accessory protein UreF.